The following is a 57-amino-acid chain: Phospholipase A2 superbin b (57 aa).

Ca(2+)-binding residues include Y28, G30, and G32. C29 and C45 are disulfide-bonded. Residue H48 is part of the active site. Residue D49 participates in Ca(2+) binding.

Ca(2+) serves as cofactor. Expressed by the venom gland.

It is found in the secreted. It carries out the reaction a 1,2-diacyl-sn-glycero-3-phosphocholine + H2O = a 1-acyl-sn-glycero-3-phosphocholine + a fatty acid + H(+). Functionally, snake venom phospholipase A2 (PLA2) that inhibits collagen-induced platelet aggregation. In terms of inhibition of platelet aggregation, superbin b is more potent as superbin c, and d. PLA2 catalyzes the calcium-dependent hydrolysis of the 2-acyl groups in 3-sn-phosphoglycerides. The protein is Phospholipase A2 superbin b of Austrelaps superbus (Lowland copperhead snake).